A 505-amino-acid chain; its full sequence is ATP synthase subunit alpha, chloroplastic (505 aa).

An ATP-binding site is contributed by 170-177 (GDRQTGKT).

This sequence belongs to the ATPase alpha/beta chains family. As to quaternary structure, F-type ATPases have 2 components, CF(1) - the catalytic core - and CF(0) - the membrane proton channel. CF(1) has five subunits: alpha(3), beta(3), gamma(1), delta(1), epsilon(1). CF(0) has four main subunits: a, b, b' and c.

Its subcellular location is the plastid. The protein localises to the chloroplast thylakoid membrane. The enzyme catalyses ATP + H2O + 4 H(+)(in) = ADP + phosphate + 5 H(+)(out). In terms of biological role, produces ATP from ADP in the presence of a proton gradient across the membrane. The alpha chain is a regulatory subunit. The protein is ATP synthase subunit alpha, chloroplastic of Phaeodactylum tricornutum (strain CCAP 1055/1).